The primary structure comprises 165 residues: SsrA-binding protein (165 aa).

Residues 141-165 are disordered; the sequence is KLHDKRENEKRKQSEREVKSALARY. A compositionally biased stretch (basic and acidic residues) spans 144–159; sequence DKRENEKRKQSEREVK.

It belongs to the SmpB family.

It is found in the cytoplasm. Functionally, required for rescue of stalled ribosomes mediated by trans-translation. Binds to transfer-messenger RNA (tmRNA), required for stable association of tmRNA with ribosomes. tmRNA and SmpB together mimic tRNA shape, replacing the anticodon stem-loop with SmpB. tmRNA is encoded by the ssrA gene; the 2 termini fold to resemble tRNA(Ala) and it encodes a 'tag peptide', a short internal open reading frame. During trans-translation Ala-aminoacylated tmRNA acts like a tRNA, entering the A-site of stalled ribosomes, displacing the stalled mRNA. The ribosome then switches to translate the ORF on the tmRNA; the nascent peptide is terminated with the 'tag peptide' encoded by the tmRNA and targeted for degradation. The ribosome is freed to recommence translation, which seems to be the essential function of trans-translation. The chain is SsrA-binding protein from Prochlorococcus marinus (strain SARG / CCMP1375 / SS120).